Reading from the N-terminus, the 64-residue chain is Large ribosomal subunit protein bL35 (64 aa).

Belongs to the bacterial ribosomal protein bL35 family.

The polypeptide is Large ribosomal subunit protein bL35 (Shewanella halifaxensis (strain HAW-EB4)).